A 489-amino-acid chain; its full sequence is Betaine aldehyde dehydrogenase (489 aa).

Thr26 and Asp93 together coordinate K(+). 150 to 152 (GAW) is a binding site for NAD(+). Catalysis depends on Lys162, which acts as the Charge relay system. 176-179 (KPSE) contacts NAD(+). K(+) is bound at residue Ile180. 229 to 232 (GVET) lines the NAD(+) pocket. Leu245 is a binding site for K(+). The Proton acceptor role is filled by Glu251. The NAD(+) site is built by Gly253, Cys285, and Glu386. The Nucleophile role is filled by Cys285. Position 285 is a cysteine sulfenic acid (-SOH) (Cys285). Residues Lys456 and Gly459 each contribute to the K(+) site. Glu463 (charge relay system) is an active-site residue.

It belongs to the aldehyde dehydrogenase family. As to quaternary structure, dimer of dimers. K(+) serves as cofactor.

It catalyses the reaction betaine aldehyde + NAD(+) + H2O = glycine betaine + NADH + 2 H(+). It functions in the pathway amine and polyamine biosynthesis; betaine biosynthesis via choline pathway; betaine from betaine aldehyde: step 1/1. Its function is as follows. Involved in the biosynthesis of the osmoprotectant glycine betaine. Catalyzes the irreversible oxidation of betaine aldehyde to the corresponding acid. The sequence is that of Betaine aldehyde dehydrogenase from Paraburkholderia phytofirmans (strain DSM 17436 / LMG 22146 / PsJN) (Burkholderia phytofirmans).